A 134-amino-acid polypeptide reads, in one-letter code: Large-conductance mechanosensitive channel (134 aa).

Helical transmembrane passes span 15 to 35 and 80 to 100; these read IDLA…QSVV and GNFI…FLAV.

The protein belongs to the MscL family. Homopentamer.

Its subcellular location is the cell inner membrane. Channel that opens in response to stretch forces in the membrane lipid bilayer. May participate in the regulation of osmotic pressure changes within the cell. This chain is Large-conductance mechanosensitive channel, found in Methylocella silvestris (strain DSM 15510 / CIP 108128 / LMG 27833 / NCIMB 13906 / BL2).